A 574-amino-acid chain; its full sequence is Methionine--tRNA ligase (574 aa).

The short motif at 11–21 (PYINGIKHLGN) is the 'HIGH' region element. Zn(2+) is bound by residues Cys143, Cys146, Cys156, and Cys159. The short motif at 345–349 (KFSTS) is the 'KMSKS' region element. Thr348 contributes to the ATP binding site.

This sequence belongs to the class-I aminoacyl-tRNA synthetase family. MetG type 1 subfamily. In terms of assembly, monomer. It depends on Zn(2+) as a cofactor.

The protein localises to the cytoplasm. It catalyses the reaction tRNA(Met) + L-methionine + ATP = L-methionyl-tRNA(Met) + AMP + diphosphate. In terms of biological role, is required not only for elongation of protein synthesis but also for the initiation of all mRNA translation through initiator tRNA(fMet) aminoacylation. The chain is Methionine--tRNA ligase from Streptomyces avermitilis (strain ATCC 31267 / DSM 46492 / JCM 5070 / NBRC 14893 / NCIMB 12804 / NRRL 8165 / MA-4680).